Consider the following 201-residue polypeptide: Thioredoxin reductase-like selenoprotein T (201 aa).

An N-terminal signal peptide occupies residues 1-26; the sequence is MARSSGPLCLLLLGGLVAGILSGASA. Residues 51 to 54 constitute a cross-link (cysteinyl-selenocysteine (Cys-Sec)); sequence CVSU. Residue selenocysteine 54 is a non-standard amino acid, selenocysteine. The chain crosses the membrane as a helical span at residues 96–116; sequence VFKLVLIGLIIAGKDPFAFFG.

It belongs to the SelWTH family. Selenoprotein T subfamily. May contain a selenide-sulfide bond between Cys-51 and Sec-54. This bond is speculated to serve as redox-active pair.

Its subcellular location is the endoplasmic reticulum membrane. The enzyme catalyses [thioredoxin]-dithiol + NADP(+) = [thioredoxin]-disulfide + NADPH + H(+). Functionally, selenoprotein with thioredoxin reductase-like oxidoreductase activity. This chain is Thioredoxin reductase-like selenoprotein T (selenot), found in Xenopus tropicalis (Western clawed frog).